A 460-amino-acid polypeptide reads, in one-letter code: Proton extrusion protein PxcA (460 aa).

Residues 84–194 (RLPDPEQNGS…KTNLDNSNAP (111 aa)) form a disordered region. A compositionally biased stretch (basic and acidic residues) spans 114–136 (NDGKDAENGRQSRDPSILEKLEF). Residues 167–194 (LTSSQPEPSDPSIKTNLAKTNLDNSNAP) show a composition bias toward polar residues. A run of 4 helical transmembrane segments spans residues 242 to 262 (FLLL…HFLF), 337 to 357 (GLKN…LILI), 373 to 393 (IYGL…DVFV), and 420 to 440 (FIYG…KYWI).

The protein belongs to the CemA family.

The protein localises to the cell inner membrane. Its function is as follows. Required for H(+) efflux immediately after light irradiation to form a rapid H(+) concentration gradient across the thylakoid membranes. Together with PxcL, contributes to transient H(+) uptake following dark to light transition. This chain is Proton extrusion protein PxcA, found in Synechococcus sp. (strain JA-3-3Ab) (Cyanobacteria bacterium Yellowstone A-Prime).